Consider the following 180-residue polypeptide: Small ribosomal subunit protein uS5 (180 aa).

Residues 24–87 (MIEKLVAVNR…EQARKNLATV (64 aa)) form the S5 DRBM domain.

This sequence belongs to the universal ribosomal protein uS5 family. Part of the 30S ribosomal subunit. Contacts proteins S4 and S8.

Its function is as follows. With S4 and S12 plays an important role in translational accuracy. In terms of biological role, located at the back of the 30S subunit body where it stabilizes the conformation of the head with respect to the body. This Xanthomonas axonopodis pv. citri (strain 306) protein is Small ribosomal subunit protein uS5.